Here is a 290-residue protein sequence, read N- to C-terminus: Sodium/potassium-transporting ATPase subunit beta-2 (290 aa).

The Cytoplasmic portion of the chain corresponds to 1-39; the sequence is MVIQKEKKSCGQVVEEWKEFVWNPRTHQFMGRTGTSWAF. Residues 40–67 traverse the membrane as a helical; Signal-anchor for type II membrane protein segment; that stretch reads ILLFYLVFYGFLTAMFTLTMWVMLQTVS. Over 68-290 the chain is Extracellular; the sequence is DHTPKYQDRL…VAFKLRINKT (223 aa). N-linked (GlcNAc...) asparagine glycans are attached at residues Asn96 and Asn118. Cysteines 129 and 150 form a disulfide. 2 N-linked (GlcNAc...) asparagine glycosylation sites follow: Asn153 and Asn159. A disulfide bond links Cys160 and Cys177. N-linked (GlcNAc...) asparagine glycosylation is found at Asn193, Asn197, and Asn238. The interval 193–290 is immunoglobulin-like; sequence NQSMNVTCAG…VAFKLRINKT (98 aa). The cysteines at positions 200 and 261 are disulfide-linked.

It belongs to the X(+)/potassium ATPases subunit beta family. The sodium/potassium-transporting ATPase is composed of a catalytic alpha subunit, an auxiliary non-catalytic beta subunit and an additional regulatory subunit. Interacts with BSG.

It localises to the cell membrane. This is the non-catalytic component of the active enzyme, which catalyzes the hydrolysis of ATP coupled with the exchange of Na(+) and K(+) ions across the plasma membrane. The exact function of the beta-2 subunit is not known. Functionally, mediates cell adhesion of neurons and astrocytes, and promotes neurite outgrowth. This Ochotona curzoniae (Black-lipped pika) protein is Sodium/potassium-transporting ATPase subunit beta-2 (ATP1B2).